Here is a 352-residue protein sequence, read N- to C-terminus: Homeobox protein Mohawk (352 aa).

The disordered stretch occupies residues 19 to 54 (GASERERGGRPYSGVLDSPHARPEVGIPDGPPLKDN). A DNA-binding region (homeobox; TALE-type) is located at residues 71 to 132 (VRHKRQALQD…NARRRLKNTV (62 aa)). Disordered stretches follow at residues 159-189 (VSSDDSCSEDGENPPRTHMNEGGYNTPVHHP) and 245-301 (TRQR…PSKD).

Belongs to the TALE/IRO homeobox family.

The protein localises to the nucleus. May act as a morphogenetic regulator of cell adhesion. The protein is Homeobox protein Mohawk (MKX) of Homo sapiens (Human).